Here is a 148-residue protein sequence, read N- to C-terminus: UPF0179 protein VNG_1401C (148 aa).

This sequence belongs to the UPF0179 family.

The polypeptide is UPF0179 protein VNG_1401C (Halobacterium salinarum (strain ATCC 700922 / JCM 11081 / NRC-1) (Halobacterium halobium)).